The chain runs to 1491 residues: Copper-transporting ATPase 1 (1491 aa).

The Cytoplasmic segment spans residues 1–644 (MEPSVDANSI…KREIKQWRGS (644 aa)). HMA domains lie at 8–74 (NSIT…FDAL) and 85–151 (TNTV…LDMG). Residues Thr18, Cys19, and Cys22 each coordinate Cu(+). Phosphothreonine is present on Thr152. The region spanning 171–237 (VMLKMKVEGM…QIEAVGFPAF (67 aa)) is the HMA 3 domain. Cu(+)-binding residues include Cys182 and Cys185. Ser270 carries the phosphoserine modification. One can recognise an HMA 4 domain in the interval 277 to 343 (STTMFTIEGM…AIEAISPGQY (67 aa)). Cu(+) is bound by residues Cys288 and Cys291. Phosphothreonine is present on Thr327. Phosphoserine is present on residues Ser339, Ser353, Ser357, and Ser362. 3 consecutive HMA domains span residues 377-443 (QEAV…FDAA), 479-545 (NKCY…FGAM), and 555-621 (GILE…FEAS). Cu(+)-binding residues include Cys388, Cys391, Cys490, Cys493, Cys566, and Cys569. A helical membrane pass occupies residues 645–666 (FLVSLFFCIPVMGLMVYMMVMD). At 667 to 705 (HHLATLHHNQNMSNEEMINMHSAMFLERQILPGLSIMNL) the chain is on the extracellular side. The N-linked (GlcNAc...) asparagine glycan is linked to Asn677. The helical transmembrane segment at 706–725 (LSLLLCLPVQFCGGWYFYIQ) threads the bilayer. Topologically, residues 726 to 732 (AYKALKH) are cytoplasmic. A helical transmembrane segment spans residues 733-753 (KTANMDVLIVLATTIAFAYSL). The Extracellular segment spans residues 754 to 772 (VILLVAMFERAKVNPITFF). Residues 773–793 (DTPPMLFVFIALGRWLEHIAK) traverse the membrane as a helical segment. The Cytoplasmic segment spans residues 794-926 (GKTSEALAKL…SKAPIQQFAD (133 aa)). A helical transmembrane segment spans residues 927–950 (KLSGYFVPFIVLVSIVTLLVWIII). Topologically, residues 951–980 (GFQNFEIVETYFPGYNRSISRTETIIRFAF) are extracellular. An N-linked (GlcNAc...) asparagine glycan is attached at Asn966. Residues 981–1002 (QASITVLCIACPCSLGLATPTA) traverse the membrane as a helical segment. The Cytoplasmic portion of the chain corresponds to 1003-1347 (VMVGTGVGAQ…LSRKTVKRIR (345 aa)). Catalysis depends on Asp1035, which acts as the 4-aspartylphosphate intermediate. Residue Glu1072 coordinates ATP. Thr1203 carries the phosphothreonine modification. The Mg(2+) site is built by Asp1292 and Asp1296. The chain crosses the membrane as a helical span at residues 1348-1365 (INFVFALIYNLVGIPIAA). Topologically, residues 1366–1376 (GVFLPIGLVLQ) are extracellular. A helical transmembrane segment spans residues 1377–1396 (PWMGSAAMAASSVSVVLSSL). The Cytoplasmic segment spans residues 1397–1491 (FLKLYRKPTY…DFREDDDTTL (95 aa)). Phosphoserine is present on residues Ser1421, Ser1423, Ser1451, Ser1454, and Ser1457. The Endocytosis signal motif lies at 1458-1459 (LL). A phosphoserine mark is found at Ser1460, Ser1464, Ser1467, and Ser1477. The interval 1477–1491 (SLLVGDFREDDDTTL) is PDZD11-binding. The Endocytosis signal motif lies at 1478–1479 (LL).

It belongs to the cation transport ATPase (P-type) (TC 3.A.3) family. Type IB subfamily. Monomer. Interacts with PDZD11. Interacts with ATOX1 and COMMD1. Interacts with TYRP1. Directly interacts with SOD3; this interaction is copper-dependent and is required for SOD3 activity. In terms of tissue distribution, widely expressed. Highly expressed in pituitary endocrine cells. Expressed in melanocytes (at protein level). Expressed in motor neuron (at protein level). Expressed in hippocampal neuron (at protein level). In the kidney, it is detected in the proximal and distal tubules (at protein level). Expressed in aorta (at protein level).

The protein resides in the golgi apparatus. The protein localises to the trans-Golgi network membrane. It is found in the cell membrane. It localises to the melanosome membrane. Its subcellular location is the early endosome membrane. The protein resides in the cell projection. The protein localises to the axon. It is found in the dendrite. It localises to the postsynaptic density. It catalyses the reaction Cu(+)(in) + ATP + H2O = Cu(+)(out) + ADP + phosphate + H(+). Its function is as follows. ATP-driven copper (Cu(+)) ion pump that plays an important role in intracellular copper ion homeostasis. Within a catalytic cycle, acquires Cu(+) ion from donor protein on the cytoplasmic side of the membrane and delivers it to acceptor protein on the lumenal side. The transfer of Cu(+) ion across the membrane is coupled to ATP hydrolysis and is associated with a transient phosphorylation that shifts the pump conformation from inward-facing to outward-facing state. Under physiological conditions, at low cytosolic copper concentration, it is localized at the trans-Golgi network (TGN) where it transfers Cu(+) ions to cuproenzymes of the secretory pathway. Upon elevated cytosolic copper concentrations, it relocalizes to the plasma membrane where it is responsible for the export of excess Cu(+) ions. May play a dual role in neuron function and survival by regulating cooper efflux and neuronal transmission at the synapse as well as by supplying Cu(+) ions to enzymes such as PAM, TYR and SOD3. In the melanosomes of pigmented cells, provides copper cofactor to TYR to form an active TYR holoenzyme for melanin biosynthesis. The protein is Copper-transporting ATPase 1 of Mus musculus (Mouse).